The sequence spans 281 residues: MTSYYYSRSLANVNKLADNTKAAARKLLDWSESNGIEVLIYETIRTKEQQAANVNSGASQTMRSYHLVGQALDFVMAKGKTVDWGAYRSDKGKKFVAKAKSLGFEWGGDWSGFVDNPHLQFNYKGYGTDTFGKGASTSNSSKPSADTNTNSLGLVDYMNLNKLDSSFANRKKLATSYGIKNYSGTATQNTTLLAKLKAGKPHTPASKNTYYTENPRKVKTLVQCDLYKSVDFTTKNQTGGTFPPGTVFTISGMGKTKGGTPRLKTKSGYYLTANTKFVKKI.

The protein belongs to the peptidase M15C family.

Its subcellular location is the secreted. Its function is as follows. Cell wall lytic enzyme. Hydrolyzes the link between L-alanine and D-glutamate residues in certain bacterial cell-wall glycopeptides. This is L-alanyl-D-glutamate peptidase (ply) from Listeria phage A118 (Bacteriophage A118).